We begin with the raw amino-acid sequence, 188 residues long: Small ribosomal subunit protein uS12m (188 aa).

The N-terminal 63 residues, 1-63 (MSGGRWISNL…AAFRLPQSSG (63 aa)), are a transit peptide targeting the mitochondrion.

The protein belongs to the universal ribosomal protein uS12 family.

It localises to the mitochondrion. Its function is as follows. Protein S12 is involved in the translation initiation step. The sequence is that of Small ribosomal subunit protein uS12m (RPS12) from Oenothera elata subsp. hookeri (Hooker's evening primrose).